The following is a 504-amino-acid chain: Light-independent protochlorophyllide reductase subunit B (504 aa).

Asp36 provides a ligand contact to [4Fe-4S] cluster. Asp279 serves as the catalytic Proton donor. 414-415 contributes to the substrate binding site; that stretch reads GL.

Belongs to the ChlB/BchB/BchZ family. Protochlorophyllide reductase is composed of three subunits; BchL, BchN and BchB. Forms a heterotetramer of two BchB and two BchN subunits. [4Fe-4S] cluster is required as a cofactor.

It catalyses the reaction chlorophyllide a + oxidized 2[4Fe-4S]-[ferredoxin] + 2 ADP + 2 phosphate = protochlorophyllide a + reduced 2[4Fe-4S]-[ferredoxin] + 2 ATP + 2 H2O. Its pathway is porphyrin-containing compound metabolism; bacteriochlorophyll biosynthesis (light-independent). In terms of biological role, component of the dark-operative protochlorophyllide reductase (DPOR) that uses Mg-ATP and reduced ferredoxin to reduce ring D of protochlorophyllide (Pchlide) to form chlorophyllide a (Chlide). This reaction is light-independent. The NB-protein (BchN-BchB) is the catalytic component of the complex. The chain is Light-independent protochlorophyllide reductase subunit B from Acidiphilium rubrum.